A 427-amino-acid chain; its full sequence is Enolase 1 (427 aa).

Gln-162 lines the (2R)-2-phosphoglycerate pocket. Catalysis depends on Glu-204, which acts as the Proton donor. The Mg(2+) site is built by Asp-241, Glu-285, and Asp-312. (2R)-2-phosphoglycerate contacts are provided by Lys-337, Arg-366, Ser-367, and Lys-388. Lys-337 functions as the Proton acceptor in the catalytic mechanism.

It belongs to the enolase family. Mg(2+) is required as a cofactor.

The protein localises to the cytoplasm. The protein resides in the secreted. It localises to the cell surface. It catalyses the reaction (2R)-2-phosphoglycerate = phosphoenolpyruvate + H2O. It participates in carbohydrate degradation; glycolysis; pyruvate from D-glyceraldehyde 3-phosphate: step 4/5. In terms of biological role, catalyzes the reversible conversion of 2-phosphoglycerate (2-PG) into phosphoenolpyruvate (PEP). It is essential for the degradation of carbohydrates via glycolysis. The sequence is that of Enolase 1 from Chlorobaculum tepidum (strain ATCC 49652 / DSM 12025 / NBRC 103806 / TLS) (Chlorobium tepidum).